A 240-amino-acid chain; its full sequence is Phosphoribosylaminoimidazole-succinocarboxamide synthase (240 aa).

The protein belongs to the SAICAR synthetase family.

It carries out the reaction 5-amino-1-(5-phospho-D-ribosyl)imidazole-4-carboxylate + L-aspartate + ATP = (2S)-2-[5-amino-1-(5-phospho-beta-D-ribosyl)imidazole-4-carboxamido]succinate + ADP + phosphate + 2 H(+). The protein operates within purine metabolism; IMP biosynthesis via de novo pathway; 5-amino-1-(5-phospho-D-ribosyl)imidazole-4-carboxamide from 5-amino-1-(5-phospho-D-ribosyl)imidazole-4-carboxylate: step 1/2. The protein is Phosphoribosylaminoimidazole-succinocarboxamide synthase of Neorickettsia sennetsu (strain ATCC VR-367 / Miyayama) (Ehrlichia sennetsu).